Consider the following 665-residue polypeptide: RNA-directed RNA polymerase (665 aa).

Residues Asn-310–Pro-485 form the RdRp catalytic domain. Mg(2+)-binding residues include Asp-454, Tyr-491, and Gly-495.

As to quaternary structure, part of the packaging complex composed of RDRP, P4 and P7. Interacts with P7. The cofactor is Mg(2+). Mn(2+) serves as cofactor.

It is found in the virion. The catalysed reaction is RNA(n) + a ribonucleoside 5'-triphosphate = RNA(n+1) + diphosphate. Rna-dependent RNA polymerase part of the packaging complex that packages the viral RNA segments, replicate them into a double-stranded form and transcribe them. The sequence is that of RNA-directed RNA polymerase (P2) from Pseudomonas phage phi6 (Bacteriophage phi-6).